The primary structure comprises 615 residues: Aldehyde oxidase GLOX1 (615 aa).

The first 25 residues, 1 to 25, serve as a signal peptide directing secretion; sequence MKKSTRLLWLLSIIVLVAAVSKAVA. Asparagine 35 carries an N-linked (GlcNAc...) asparagine glycan. The tract at residues 70 to 89 is disordered; it reads PPKAGKGKGKGKGRGTVAAG. Residues 72 to 82 show a composition bias toward basic residues; sequence KAGKGKGKGKG. 2 N-linked (GlcNAc...) asparagine glycosylation sites follow: asparagine 187 and asparagine 297.

Its subcellular location is the secreted. The catalysed reaction is an aldehyde + O2 + H2O = a carboxylate + H2O2 + H(+). In terms of biological role, catalyzes the oxidation of aldehydes to the corresponding carboxylate by coupling the reaction to the reduction of dioxygen to hydrogen peroxide. Substrates include glyoxal and other aldehydes. May be regulated by the transcription factor MYB80 during anther development and play a role in tapetum and pollen development. The protein is Aldehyde oxidase GLOX1 of Arabidopsis thaliana (Mouse-ear cress).